A 110-amino-acid chain; its full sequence is Large ribosomal subunit protein uL22 (110 aa).

Residues 84 to 95 show a composition bias toward basic residues; it reads ARGTASKIRKPT. The disordered stretch occupies residues 84–110; sequence ARGTASKIRKPTSHVMVEVSKPEKKEA.

Belongs to the universal ribosomal protein uL22 family. In terms of assembly, part of the 50S ribosomal subunit.

Functionally, this protein binds specifically to 23S rRNA; its binding is stimulated by other ribosomal proteins, e.g. L4, L17, and L20. It is important during the early stages of 50S assembly. It makes multiple contacts with different domains of the 23S rRNA in the assembled 50S subunit and ribosome. The globular domain of the protein is located near the polypeptide exit tunnel on the outside of the subunit, while an extended beta-hairpin is found that lines the wall of the exit tunnel in the center of the 70S ribosome. In Campylobacter concisus (strain 13826), this protein is Large ribosomal subunit protein uL22.